Consider the following 199-residue polypeptide: Nucleoid occlusion factor SlmA (199 aa).

The HTH tetR-type domain maps to 11–71 (ERRQQVLTVL…ALIDNLEAHL (61 aa)). Positions 34–53 (TTARIAAEVGVSEAALYRYY) form a DNA-binding region, H-T-H motif.

Belongs to the nucleoid occlusion factor SlmA family. In terms of assembly, homodimer. Interacts with FtsZ.

It is found in the cytoplasm. It localises to the nucleoid. In terms of biological role, required for nucleoid occlusion (NO) phenomenon, which prevents Z-ring formation and cell division over the nucleoid. Acts as a DNA-associated cell division inhibitor that binds simultaneously chromosomal DNA and FtsZ, and disrupts the assembly of FtsZ polymers. SlmA-DNA-binding sequences (SBS) are dispersed on non-Ter regions of the chromosome, preventing FtsZ polymerization at these regions. This Pasteurella multocida (strain Pm70) protein is Nucleoid occlusion factor SlmA.